An 86-amino-acid polypeptide reads, in one-letter code: UPF0297 protein CA_C1679 (86 aa).

Belongs to the UPF0297 family.

This chain is UPF0297 protein CA_C1679, found in Clostridium acetobutylicum (strain ATCC 824 / DSM 792 / JCM 1419 / IAM 19013 / LMG 5710 / NBRC 13948 / NRRL B-527 / VKM B-1787 / 2291 / W).